Here is a 355-residue protein sequence, read N- to C-terminus: Uroporphyrinogen decarboxylase (355 aa).

Residues 36-40, D85, Y160, S215, and H334 contribute to the substrate site; that span reads RQAGR.

The protein belongs to the uroporphyrinogen decarboxylase family. Homodimer.

It localises to the cytoplasm. It carries out the reaction uroporphyrinogen III + 4 H(+) = coproporphyrinogen III + 4 CO2. It functions in the pathway porphyrin-containing compound metabolism; protoporphyrin-IX biosynthesis; coproporphyrinogen-III from 5-aminolevulinate: step 4/4. Catalyzes the decarboxylation of four acetate groups of uroporphyrinogen-III to yield coproporphyrinogen-III. The chain is Uroporphyrinogen decarboxylase from Rhodococcus erythropolis (strain PR4 / NBRC 100887).